The following is a 164-amino-acid chain: Phosphopantetheine adenylyltransferase (164 aa).

Ser-9 is a substrate binding site. ATP contacts are provided by residues 9–10 and His-17; that span reads SF. Positions 41, 73, and 87 each coordinate substrate. ATP is bound by residues 88 to 90, Glu-98, and 122 to 128; these read GLR and YSYLSSS.

Belongs to the bacterial CoaD family. In terms of assembly, homohexamer. The cofactor is Mg(2+).

The protein resides in the cytoplasm. It carries out the reaction (R)-4'-phosphopantetheine + ATP + H(+) = 3'-dephospho-CoA + diphosphate. It participates in cofactor biosynthesis; coenzyme A biosynthesis; CoA from (R)-pantothenate: step 4/5. Functionally, reversibly transfers an adenylyl group from ATP to 4'-phosphopantetheine, yielding dephospho-CoA (dPCoA) and pyrophosphate. This chain is Phosphopantetheine adenylyltransferase, found in Rhodococcus erythropolis (strain PR4 / NBRC 100887).